Consider the following 272-residue polypeptide: Deaminated glutathione amidase (272 aa).

Residues 1-253 (MKPYLAAALQ…PGLAIAEINP (253 aa)) form the CN hydrolase domain. E43 (proton acceptor) is an active-site residue. The active-site Proton donor is the K115. C158 (nucleophile) is an active-site residue.

This sequence belongs to the carbon-nitrogen hydrolase superfamily. NIT1/NIT2 family.

It catalyses the reaction N-(4-oxoglutaryl)-L-cysteinylglycine + H2O = L-cysteinylglycine + 2-oxoglutarate. Functionally, hydrolyzes deaminated glutathione (dGSH, 2-oxoglutaramate) to alpha-ketoglutarate (alpha-KG) and cysteinylglycine (specific activity 7.77 umol/min/mg), hydrolyzes alpha-ketoglutaramate (a-KGM, specific activity 2.13 umol/min/mg), has no activity on glutathione or L-glutamine. May function as a metabolite repair enzyme. The polypeptide is Deaminated glutathione amidase (Synechocystis sp. (strain PCC 6803 / GT-S)).